A 247-amino-acid polypeptide reads, in one-letter code: Segregation and condensation protein A (247 aa).

It belongs to the ScpA family. In terms of assembly, component of a cohesin-like complex composed of ScpA, ScpB and the Smc homodimer, in which ScpA and ScpB bind to the head domain of Smc. The presence of the three proteins is required for the association of the complex with DNA.

The protein resides in the cytoplasm. Participates in chromosomal partition during cell division. May act via the formation of a condensin-like complex containing Smc and ScpB that pull DNA away from mid-cell into both cell halves. The sequence is that of Segregation and condensation protein A from Lactobacillus gasseri (strain ATCC 33323 / DSM 20243 / BCRC 14619 / CIP 102991 / JCM 1131 / KCTC 3163 / NCIMB 11718 / NCTC 13722 / AM63).